A 273-amino-acid chain; its full sequence is Mediator of RNA polymerase II transcription subunit 18 (273 aa).

The span at 90–106 (GAQSSAASSGDPDAPMS) shows a compositional bias: low complexity. The disordered stretch occupies residues 90–114 (GAQSSAASSGDPDAPMSGTDTGTNF).

It belongs to the Mediator complex subunit 18 family. As to quaternary structure, component of the Mediator complex.

Its subcellular location is the nucleus. Its function is as follows. Component of the Mediator complex, a coactivator involved in the regulated transcription of nearly all RNA polymerase II-dependent genes. Mediator functions as a bridge to convey information from gene-specific regulatory proteins to the basal RNA polymerase II transcription machinery. Mediator is recruited to promoters by direct interactions with regulatory proteins and serves as a scaffold for the assembly of a functional preinitiation complex with RNA polymerase II and the general transcription factors. The polypeptide is Mediator of RNA polymerase II transcription subunit 18 (srb5) (Aspergillus oryzae (strain ATCC 42149 / RIB 40) (Yellow koji mold)).